A 106-amino-acid polypeptide reads, in one-letter code: Urease subunit beta (106 aa).

This sequence belongs to the urease beta subunit family. In terms of assembly, heterotrimer of UreA (gamma), UreB (beta) and UreC (alpha) subunits. Three heterotrimers associate to form the active enzyme.

It is found in the cytoplasm. The enzyme catalyses urea + 2 H2O + H(+) = hydrogencarbonate + 2 NH4(+). The protein operates within nitrogen metabolism; urea degradation; CO(2) and NH(3) from urea (urease route): step 1/1. The chain is Urease subunit beta from Parasynechococcus marenigrum (strain WH8102).